The following is a 496-amino-acid chain: Probable G-protein coupled receptor Mth-like 5 (496 aa).

Topologically, residues methionine 1–asparagine 219 are extracellular. The N-linked (GlcNAc...) asparagine glycan is linked to asparagine 82. Residues proline 220–leucine 240 traverse the membrane as a helical segment. The Cytoplasmic segment spans residues proline 241–leucine 246. A helical transmembrane segment spans residues valine 247 to valine 267. Over arginine 268–histidine 276 the chain is Extracellular. The helical transmembrane segment at valine 277 to leucine 297 threads the bilayer. Topologically, residues asparagine 298 to serine 327 are cytoplasmic. The chain crosses the membrane as a helical span at residues alanine 328–leucine 348. Residues aspartate 349 to glycine 366 are Extracellular-facing. Residues tryptophan 367 to phenylalanine 387 form a helical membrane-spanning segment. Topologically, residues tyrosine 388–asparagine 411 are cytoplasmic. The helical transmembrane segment at phenylalanine 412–serine 432 threads the bilayer. The Extracellular portion of the chain corresponds to tryptophan 433 to glycine 438. A helical membrane pass occupies residues leucine 439–valine 459. Residues leucine 460–tyrosine 496 lie on the Cytoplasmic side of the membrane.

This sequence belongs to the G-protein coupled receptor 2 family. Mth subfamily.

The protein resides in the cell membrane. The protein is Probable G-protein coupled receptor Mth-like 5 (mthl5) of Drosophila melanogaster (Fruit fly).